An 83-amino-acid chain; its full sequence is Subtilisin-chymotrypsin inhibitor CI-1B (83 aa).

Residues 1–28 form a disordered region; the sequence is MRSMEGSVPKYPEPTEGSIGASGAKRSW.

It belongs to the protease inhibitor I13 (potato type I serine protease inhibitor) family.

Its function is as follows. Inhibits both subtilisin and chymotrypsin. This is Subtilisin-chymotrypsin inhibitor CI-1B from Hordeum vulgare (Barley).